The primary structure comprises 454 residues: Sensor histidine kinase RppB (454 aa).

The Periplasmic portion of the chain corresponds to 1-13 (MNTRRLFARSRLQ). Residues 14 to 34 (LAFWYALVMGGILTLLGLGVY) form a helical membrane-spanning segment. Over 35–186 (RAIVQANWMA…LAAFDAENKR (152 aa)) the chain is Cytoplasmic. A helical membrane pass occupies residues 187–207 (ILWILGLSFPIALGLVAFSSW). Residues 208 to 454 (GLAGLAMRPI…PIFSVPIVHS (247 aa)) lie on the Periplasmic side of the membrane. Positions 230 to 448 (NAAHELRSPL…LFTIQLPIFS (219 aa)) constitute a Histidine kinase domain. His-233 is subject to Phosphohistidine; by autocatalysis.

The protein resides in the cell inner membrane. The enzyme catalyses ATP + protein L-histidine = ADP + protein N-phospho-L-histidine.. In terms of biological role, member of two-component regulatory system RppA/RppB, involved in the establishment of the appropriate stoichiometry between the 2 photosystems. It senses changes in the plastoquinone (PQ) redox poise. Another group shows this two-component pair, renamed NrsR/NrsS, controls the nickel-dependent expression of the nrsBACD operon; they suggest the photosystem-related activities seen earlier are due to the expression of NrsS (RppB) in the absence of its natural substrate NrsR (RppA). This is Sensor histidine kinase RppB from Synechocystis sp. (strain ATCC 27184 / PCC 6803 / Kazusa).